Here is a 494-residue protein sequence, read N- to C-terminus: Amidophosphoribosyltransferase (494 aa).

Residues 1-10 (MFNYSGLNEE) constitute a propeptide that is removed on maturation. Cys11 functions as the Nucleophile in the catalytic mechanism. The Glutamine amidotransferase type-2 domain occupies 11–231 (CGVFGIWNHP…AGEYVVINDK (221 aa)). Ser294, Asp356, and Asp357 together coordinate Mg(2+).

The protein in the C-terminal section; belongs to the purine/pyrimidine phosphoribosyltransferase family. It depends on Mg(2+) as a cofactor.

It carries out the reaction 5-phospho-beta-D-ribosylamine + L-glutamate + diphosphate = 5-phospho-alpha-D-ribose 1-diphosphate + L-glutamine + H2O. It participates in purine metabolism; IMP biosynthesis via de novo pathway; N(1)-(5-phospho-D-ribosyl)glycinamide from 5-phospho-alpha-D-ribose 1-diphosphate: step 1/2. Catalyzes the formation of phosphoribosylamine from phosphoribosylpyrophosphate (PRPP) and glutamine. The chain is Amidophosphoribosyltransferase from Staphylococcus aureus (strain Mu50 / ATCC 700699).